Here is a 141-residue protein sequence, read N- to C-terminus: Large ribosomal subunit protein uL11 (141 aa).

The protein belongs to the universal ribosomal protein uL11 family. Part of the ribosomal stalk of the 50S ribosomal subunit. Interacts with L10 and the large rRNA to form the base of the stalk. L10 forms an elongated spine to which L12 dimers bind in a sequential fashion forming a multimeric L10(L12)X complex. Post-translationally, one or more lysine residues are methylated.

In terms of biological role, forms part of the ribosomal stalk which helps the ribosome interact with GTP-bound translation factors. The polypeptide is Large ribosomal subunit protein uL11 (Crocosphaera subtropica (strain ATCC 51142 / BH68) (Cyanothece sp. (strain ATCC 51142))).